The sequence spans 256 residues: Exosome complex component RRP41-like (256 aa).

The protein belongs to the RNase PH family. Probable component of the RNA exosome complex. Highly expressed in imbibed seeds and young seedlings.

The protein localises to the cytoplasm. It is found in the nucleus. Functionally, non-catalytic component of the RNA exosome complex which has 3'-&gt;5' exoribonuclease activity and participates in a multitude of cellular RNA processing, maturation and degradation events. In vitro, is a processive phosphorolytic exonuclease and requires a single-stranded poly(A) tail on the substrate RNA for its activity. Plays an important role in seed germination and early seedling growth by mediating specific cytoplasmic mRNA decay of transcripts coding for the abscisic acid (ABA) biosynthetic enzymes NCED5 and NCED6, and the ABA signaling transcription factors ABI3 and ABI4. This is Exosome complex component RRP41-like from Arabidopsis thaliana (Mouse-ear cress).